A 349-amino-acid chain; its full sequence is Protein RecA (349 aa).

Position 67 to 74 (67 to 74 (GPESSGKT)) interacts with ATP.

The protein belongs to the RecA family.

It is found in the cytoplasm. Its function is as follows. Can catalyze the hydrolysis of ATP in the presence of single-stranded DNA, the ATP-dependent uptake of single-stranded DNA by duplex DNA, and the ATP-dependent hybridization of homologous single-stranded DNAs. It interacts with LexA causing its activation and leading to its autocatalytic cleavage. The chain is Protein RecA from Chlamydia abortus (strain DSM 27085 / S26/3) (Chlamydophila abortus).